Reading from the N-terminus, the 289-residue chain is Aquaporin PIP2-3 (289 aa).

Residues 1–25 are disordered; sequence MAKQDIEASGPEAGEFSAKDYTDPP. The next 2 helical transmembrane spans lie at 43 to 63 and 80 to 100; these read AVIAEFIATLLFLYITVATVI and CGGVGILGIAWAFGGMIFILV. Residues 112–114 carry the NPA 1 motif; it reads NPA. The next 3 membrane-spanning stretches (helical) occupy residues 131-151, 173-193, and 207-227; these read LLYIIAQCLGAICGVGLVKGF, GTGLAAEIIGTFVLVYTVFSA, and VLAPLPIGFAVFMVHLATIPI. Residues 233–235 carry the NPA 2 motif; the sequence is NPA. The chain crosses the membrane as a helical span at residues 255-275; that stretch reads IFWVGPLIGAAIAAAYHQYVL.

The protein belongs to the MIP/aquaporin (TC 1.A.8) family. PIP (TC 1.A.8.11) subfamily.

It is found in the cell membrane. In terms of biological role, aquaporins facilitate the transport of water and small neutral solutes across cell membranes. In Zea mays (Maize), this protein is Aquaporin PIP2-3 (PIP2-3).